We begin with the raw amino-acid sequence, 307 residues long: D-alanine--D-alanine ligase (307 aa).

Residues 101-301 (RDVLAAAGVP…FGELVRWMVD (201 aa)) enclose the ATP-grasp domain. 128-182 (LPPPYVIKPLGEGSSFGVFIVREDQAYPPQELTRSDWAFGNRVLVESYIGGRELT) provides a ligand contact to ATP. Asp-251, Glu-268, and Asn-270 together coordinate Mg(2+).

Belongs to the D-alanine--D-alanine ligase family. Mg(2+) is required as a cofactor. It depends on Mn(2+) as a cofactor.

The protein resides in the cytoplasm. The catalysed reaction is 2 D-alanine + ATP = D-alanyl-D-alanine + ADP + phosphate + H(+). The protein operates within cell wall biogenesis; peptidoglycan biosynthesis. Cell wall formation. This is D-alanine--D-alanine ligase from Beijerinckia indica subsp. indica (strain ATCC 9039 / DSM 1715 / NCIMB 8712).